The chain runs to 188 residues: Elongation factor P (188 aa).

Lysine 34 bears the N6-(3,6-diaminohexanoyl)-5-hydroxylysine mark.

This sequence belongs to the elongation factor P family. May be beta-lysylated on the epsilon-amino group of Lys-34 by the combined action of EpmA and EpmB, and then hydroxylated on the C5 position of the same residue by EpmC (if this protein is present). Lysylation is critical for the stimulatory effect of EF-P on peptide-bond formation. The lysylation moiety may extend toward the peptidyltransferase center and stabilize the terminal 3-CCA end of the tRNA. Hydroxylation of the C5 position on Lys-34 may allow additional potential stabilizing hydrogen-bond interactions with the P-tRNA.

The protein resides in the cytoplasm. The protein operates within protein biosynthesis; polypeptide chain elongation. Its function is as follows. Involved in peptide bond synthesis. Alleviates ribosome stalling that occurs when 3 or more consecutive Pro residues or the sequence PPG is present in a protein, possibly by augmenting the peptidyl transferase activity of the ribosome. Modification of Lys-34 is required for alleviation. This Coxiella burnetii (strain CbuK_Q154) (Coxiella burnetii (strain Q154)) protein is Elongation factor P.